The primary structure comprises 450 residues: Phosphoglucosamine mutase (450 aa).

Serine 103 serves as the catalytic Phosphoserine intermediate. Mg(2+)-binding residues include serine 103, aspartate 243, aspartate 245, and aspartate 247. Serine 103 carries the post-translational modification Phosphoserine.

This sequence belongs to the phosphohexose mutase family. Mg(2+) serves as cofactor. Post-translationally, activated by phosphorylation.

The catalysed reaction is alpha-D-glucosamine 1-phosphate = D-glucosamine 6-phosphate. In terms of biological role, catalyzes the conversion of glucosamine-6-phosphate to glucosamine-1-phosphate. In Lactobacillus delbrueckii subsp. bulgaricus (strain ATCC BAA-365 / Lb-18), this protein is Phosphoglucosamine mutase.